Consider the following 276-residue polypeptide: Ribosomal RNA small subunit methyltransferase A (276 aa).

N27, L29, G54, E75, D101, and N123 together coordinate S-adenosyl-L-methionine.

The protein belongs to the class I-like SAM-binding methyltransferase superfamily. rRNA adenine N(6)-methyltransferase family. RsmA subfamily.

It is found in the cytoplasm. The enzyme catalyses adenosine(1518)/adenosine(1519) in 16S rRNA + 4 S-adenosyl-L-methionine = N(6)-dimethyladenosine(1518)/N(6)-dimethyladenosine(1519) in 16S rRNA + 4 S-adenosyl-L-homocysteine + 4 H(+). Its function is as follows. Specifically dimethylates two adjacent adenosines (A1518 and A1519) in the loop of a conserved hairpin near the 3'-end of 16S rRNA in the 30S particle. May play a critical role in biogenesis of 30S subunits. The protein is Ribosomal RNA small subunit methyltransferase A of Bartonella tribocorum (strain CIP 105476 / IBS 506).